We begin with the raw amino-acid sequence, 227 residues long: Ribonuclease 3 (227 aa).

An RNase III domain is found at 4-133 (FEKLEKLLSY…LIAAIYLDSN (130 aa)). Glutamate 46 contributes to the Mg(2+) binding site. Aspartate 50 is a catalytic residue. Residues asparagine 119 and glutamate 122 each coordinate Mg(2+). The active site involves glutamate 122. In terms of domain architecture, DRBM spans 158-226 (DPKTALQEWA…ARSLLHRLKN (69 aa)).

It belongs to the ribonuclease III family. In terms of assembly, homodimer. The cofactor is Mg(2+).

The protein resides in the cytoplasm. The catalysed reaction is Endonucleolytic cleavage to 5'-phosphomonoester.. Its function is as follows. Digests double-stranded RNA. Involved in the processing of primary rRNA transcript to yield the immediate precursors to the large and small rRNAs (23S and 16S). Processes some mRNAs, and tRNAs when they are encoded in the rRNA operon. Processes pre-crRNA and tracrRNA of type II CRISPR loci if present in the organism. In Rickettsia conorii (strain ATCC VR-613 / Malish 7), this protein is Ribonuclease 3.